The sequence spans 171 residues: Myelin basic protein (171 aa).

N-acetylalanine is present on alanine 1. Serine 7 and serine 12 each carry phosphoserine. Tyrosine 14 carries the post-translational modification Phosphotyrosine. At threonine 17 the chain carries Phosphothreonine. Serine 19 bears the Phosphoserine mark. The residue at position 20 (threonine 20) is a Phosphothreonine. Citrulline occurs at positions 25 and 31. Position 35 is a phosphothreonine (threonine 35). Serine 40 carries the post-translational modification Phosphoserine. An omega-N-methylarginine mark is found at arginine 43 and arginine 49. The segment at phenylalanine 44 to serine 115 is disordered. The residue at position 56 (serine 56) is a Phosphoserine. Tyrosine 69 carries the post-translational modification Phosphotyrosine. Serine 76 is subject to Phosphoserine. Threonine 80, threonine 95, and threonine 98 each carry phosphothreonine. Position 103 is a deamidated glutamine (glutamine 103). An Omega-N-methylarginine; alternate modification is found at arginine 107. Arginine 107 bears the Symmetric dimethylarginine; alternate mark. Phosphoserine is present on serine 115. Arginine 122 and arginine 130 each carry citrulline. Residue glutamine 148 is modified to Deamidated glutamine. A Citrulline modification is found at arginine 160. Serine 162 is modified (phosphoserine). Position 166 is a phosphoserine; by UHMK1 (serine 166). Citrulline is present on arginine 171.

This sequence belongs to the myelin basic protein family. Homodimer. Post-translationally, as in other animals, several charge isomers may be produced as a result of optional post-translational modifications, such as phosphorylation of serine or threonine residues, deamidation of glutamine or asparagine residues, citrullination and methylation of arginine residues. In terms of processing, phosphorylated by TAOK2, VRK2, MAPK11, MAPK12, MAPK14 and MINK1. Proteolytically cleaved in B cell lysosomes by cathepsin CTSG which degrades the major immunogenic MBP epitope and prevents the activation of MBP-specific autoreactive T cells.

The protein localises to the myelin membrane. Its function is as follows. Is, with PLP, the most abundant protein component of the myelin membrane in the CNS. Has a role in both the formation and stabilization of this compact multilayer arrangement of bilayers. Each splice variant and charge isomer may have a specialized function in the assembly of an optimized, biochemically functional myelin membrane. In Pan troglodytes (Chimpanzee), this protein is Myelin basic protein (MBP).